Reading from the N-terminus, the 1140-residue chain is Multiple epidermal growth factor-like domains protein 10 (1140 aa).

The signal sequence occupies residues M1–P25. A necessary for interaction with AP2M1, self-assembly and formation of the irregular, mosaic-like adhesion pattern region spans residues M1–G857. The Extracellular portion of the chain corresponds to L26 to G857. Positions D30–P107 constitute an EMI domain. Cystine bridges form between C34–C95, C60–C69, C94–C105, C109–C118, C113–C124, C126–C135, C148–C160, C154–C167, C169–C178, C191–C203, C197–C210, C212–C221, C234–C246, C240–C253, C255–C264, C281–C289, C283–C296, C298–C307, C320–C332, C326–C339, C341–C350, C409–C421, C415–C428, C430–C439, C456–C464, C458–C471, C473–C482, C495–C507, C501–C514, C516–C525, C542–C550, C544–C557, C559–C568, C581–C593, C587–C600, C602–C611, C669–C681, C675–C688, C690–C699, C716–C724, C718–C731, C733–C742, C755–C767, C761–C774, C776–C785, C802–C810, C804–C817, and C819–C828. EGF-like domains are found at residues V106–S136, W144–E179, Y187–E222, H230–G265, S278–Q308, Y316–E351, Y405–S440, S453–S483, W491–E526, A539–D569, W577–Q612, F665–S700, I713–T743, Y751–E786, and R799–D829. An N-linked (GlcNAc...) asparagine glycan is attached at N134. N-linked (GlcNAc...) asparagine glycosylation occurs at N496. A helical membrane pass occupies residues A858 to I878. The Cytoplasmic portion of the chain corresponds to Y879–E1140. The tract at residues R945–E1140 is necessary for formation of large intracellular vacuoles. Residue Y1030 is modified to Phosphotyrosine; by SRC. The interval Y1111–E1140 is disordered. A compositionally biased stretch (low complexity) spans S1128 to E1140.

It belongs to the MEGF family. Homomer. Interacts with GULP1 and ABCA1. Interacts with AP2M1. Does not interact with MEGF11. Binds with high affinity to complement C1q. Interacts (via the cytoplasmic domain) with NOTCH1 (via NICD domain). Post-translationally, phosphorylated on tyrosine residues. Phosphorylation at Tyr-1030 may be important for muscle cell proliferation. In terms of processing, ubiquitinated; mono- and polyubiquitinated forms are detected. As to expression, expressed in muscle (at protein level).

It localises to the cell membrane. The protein resides in the cell projection. It is found in the phagocytic cup. Functionally, membrane receptor involved in phagocytosis by macrophages and astrocytes of apoptotic cells. Receptor for C1q, an eat-me signal, that binds phosphatidylserine expressed on the surface of apoptotic cells. Cooperates with ABCA1 within the process of engulfment. Promotes the formation of large intracellular vacuoles and may be responsible for the uptake of amyloid-beta peptides. Necessary for astrocyte-dependent apoptotic neuron clearance in the developing cerebellum. Plays role in muscle cell proliferation, adhesion and motility. Is also an essential factor in the regulation of myogenesis. Controls the balance between skeletal muscle satellite cells proliferation and differentiation through regulation of the notch signaling pathway. May also function in the mosaic spacing of specific neuron subtypes in the retina through homotypic retinal neuron repulsion. Mosaics provide a mechanism to distribute each cell type evenly across the retina, ensuring that all parts of the visual field have access to a full set of processing elements. The polypeptide is Multiple epidermal growth factor-like domains protein 10 (Homo sapiens (Human)).